The sequence spans 598 residues: MTTWLLLVVCLGIACQGITSVTVRENSPRKLANSMNVIHEWKYLDYDFGSDERRQAAMQSGEYDHTKNYPFDVDQWRGMTFVTVPRYKGVPSSLNVISEKIGNGGRLLQPYPDWSWANYKDCSGIVSAYKIAIDKFDRLWILDSGIINNTQPMCSPKLHVFDLNTSHQLKQVVMPHDIAVNASTGNGGLVSLVVQAMDPVNTIVYMADDKGDALIVYQNSDESFHRLTSNTFDYDPKYIKMMDAGESFTAQDGIFGMALSPMTNNLYYSPLSSRSLYYVNTKPFMKSEYGANNVQYQGVQDIFNTESIAKIMSKNGVLFFGLMNNSAIGCWNEHQPLQRENMDMVAQNEETLQTVVAMKMMHLPQSNKMNRMHRMNRVNRVNRMDRMDRIDRMDRMDRMDTMDTMDRIDRMDRMDRIDRIDRMHTMDTMDTMDRTDKMSSMDRMDRMDRVDRMDTMDRTDKMSSMDRMDRMDRVDTMDTMDTMDRMDRMDRMDRMDRMDRMDTMDRTDKMSRIDRMDKIDRMDRMDRTNRMDRMNRMNRQMNEYMMALSMKLQKFINNDYNFNEVNFRILGANVNDLIMNTRCANSDNQNNNQNKHNN.

The signal sequence occupies residues 1-17; sequence MTTWLLLVVCLGIACQG. Residues Asn148, Asn164, Asn181, and Asn324 are each glycosylated (N-linked (GlcNAc...) asparagine).

It belongs to the major royal jelly protein family. In terms of tissue distribution, found in and secreted from the hypopharyngeal glands of the worker honey bee (at protein level); expression peaks at 8 days post eclosion. Expressed in the brains of adult worker bees peaking at 12 days post eclosion (at protein level). Expressed in the spermatheca of adult queen bees (at protein level); Expression levels are higher in mated queens than in virgin queens. Expressed in the heads of worker bees after eclosion, expression dropping with age and detectable up to 26 days of age.

It localises to the secreted. Component of royal jelly, a substance produced in the hypopharyngeal gland containing proteins, free amino acids, fatty acids, sugars and other nutrients, which is fed to developing larvae by worker nurse bees. Major royal jelly proteins (MRJPs) are high in essential amino acids and probably have a nutritional function in larval food. All larvae are fed some royal jelly (also known as worker jelly) early in their development but it forms the principal source of nutrition for larvae destined to become queen bees. Produced in the spermatheca of adult queen bees, along with other major royal jelly proteins, where it may act as a nutrient supply for sperm stored by mated queens, or be involved in energy metabolism. The sequence is that of Major royal jelly protein 5 from Apis mellifera (Honeybee).